Reading from the N-terminus, the 490-residue chain is Tektin-3 (490 aa).

3 O-linked (GalNAc...) threonine glycosylation sites follow: T7, T9, and T11. N-linked (GlcNAc...) asparagine glycans are attached at residues N41, N86, N111, and N276. A coiled-coil region spans residues 415 to 461; it reads MAQLRLVNEVYEVDETIQTLQQRLRDSEDTLQSLAHTKATLEHDLAV.

This sequence belongs to the tektin family. In terms of assembly, microtubule inner protein component of sperm flagellar doublet microtubules. Interacts with TEKT1, TEKT2, TEKT4 and TEKT5. Interacts with CCDC38. In terms of processing, N- and O-glycosylated. Post-translationally, ubiquitinated, leading to its degradation. Deubiquitinated by USP16, promoting its stability. May be proteolytically processed during the epididymal transit of spermatozoa. In terms of tissue distribution, expressed preferentially in testis. Expressed predominantly in late pachytene spermatocytes and early round spermatids. Expressed in spermatozoa.

Its subcellular location is the cytoplasm. The protein localises to the cytoskeleton. The protein resides in the cilium axoneme. It localises to the flagellum axoneme. It is found in the cytoplasmic vesicle. Its subcellular location is the secretory vesicle. The protein localises to the acrosome outer membrane. Functionally, microtubule inner protein (MIP) part of the dynein-decorated doublet microtubules (DMTs) in cilia and flagellar axoneme. Forms filamentous polymers in the walls of ciliary and flagellar microtubules. Required for normal sperm mobility. In Mus musculus (Mouse), this protein is Tektin-3 (Tekt3).